Consider the following 101-residue polypeptide: Small ribosomal subunit protein uS17 (101 aa).

The protein belongs to the universal ribosomal protein uS17 family. Part of the 30S ribosomal subunit.

One of the primary rRNA binding proteins, it binds specifically to the 5'-end of 16S ribosomal RNA. This Koribacter versatilis (strain Ellin345) protein is Small ribosomal subunit protein uS17.